The following is a 511-amino-acid chain: Maturase K (511 aa).

It belongs to the intron maturase 2 family. MatK subfamily.

Its subcellular location is the plastid. It localises to the chloroplast. Functionally, usually encoded in the trnK tRNA gene intron. Probably assists in splicing its own and other chloroplast group II introns. This Brachypodium sylvaticum (False brome) protein is Maturase K.